A 181-amino-acid chain; its full sequence is Inner membrane-spanning protein YciB (181 aa).

5 helical membrane-spanning segments follow: residues 10-30 (LVIF…GALI), 50-70 (MHLI…VFHD), 72-92 (AFIK…LGIS), 118-138 (ITWY…YVAF), and 148-168 (FKVF…VFYL).

Belongs to the YciB family.

It is found in the cell inner membrane. Functionally, plays a role in cell envelope biogenesis, maintenance of cell envelope integrity and membrane homeostasis. This is Inner membrane-spanning protein YciB from Shewanella putrefaciens (strain CN-32 / ATCC BAA-453).